A 534-amino-acid polypeptide reads, in one-letter code: Autophagic-related protein 16.2 (534 aa).

WD repeat units lie at residues 243–281, 288–329, 330–368, 371–411, 413–452, 459–498, and 504–534; these read THDG…TDAS, GCLG…STFS, GHTD…CLKS, VGST…ATYS, ELGQ…IIHL, KTSC…LEKV, and SDSA…TLWR.

This sequence belongs to the WD repeat tipD family. As to quaternary structure, homodimer (via N-terminus). Most likely a component of a complex at least containing atg-5, lgg-3, atg-16.1 and/or atg-16.2. Interacts (via N-terminus) with atg-16.1 (via N-terminus). Interacts (via N-terminus) with atg-5. Interacts (via WD 5-6 repeats) with lgg-2; the interaction is direct. As to expression, expressed in neurons, pharyngeal muscles, body wall muscle cells and intestinal cells.

It is found in the cytoplasm. The protein resides in the cell membrane. Most likely a component of the atg-5-atg-12-atg-16.1/atg-16.2 complex, which is recruited to the preautophagosomal membrane and associates with lgg-2 to promote autophagosome formation. Plays a role in the recruitment of lipidated lgg-1 probably to the autophagosome membrane to promote autophagosome formation. Furthermore, association with atg-5 is required for the nucleation of lgg-1 positive autophagosomes. Although its role in autophagosome formation may be distinct to the role of atg-16.2, it functions in a partially redundant manner with atg-16.1 to regulate autophagic processes. In a daf-18/PTEN- and daf-16/FOXO-dependent manner, required for maintaining the numbers of germ stem cell progenitors in the gonad during the late phases of larval development. The protein is Autophagic-related protein 16.2 of Caenorhabditis elegans.